Here is a 124-residue protein sequence, read N- to C-terminus: Small ribosomal subunit protein uS12 (124 aa).

The tract at residues 1 to 27 (MPTINQLIRKPRKSQTEKTASPALQNC) is disordered. A compositionally biased stretch (polar residues) spans 17-27 (EKTASPALQNC). 3-methylthioaspartic acid is present on D89.

The protein belongs to the universal ribosomal protein uS12 family. As to quaternary structure, part of the 30S ribosomal subunit. Contacts proteins S8 and S17. May interact with IF1 in the 30S initiation complex.

Its function is as follows. With S4 and S5 plays an important role in translational accuracy. Interacts with and stabilizes bases of the 16S rRNA that are involved in tRNA selection in the A site and with the mRNA backbone. Located at the interface of the 30S and 50S subunits, it traverses the body of the 30S subunit contacting proteins on the other side and probably holding the rRNA structure together. The combined cluster of proteins S8, S12 and S17 appears to hold together the shoulder and platform of the 30S subunit. This is Small ribosomal subunit protein uS12 from Borreliella afzelii (strain PKo) (Borrelia afzelii).